A 458-amino-acid polypeptide reads, in one-letter code: Serine/threonine-protein kinase tricornered (458 aa).

Residues 92–389 (FEALKVIGRG…LEDLKSVPFF (298 aa)) enclose the Protein kinase domain. Residues 98–106 (IGRGAFGEV) and K121 each bind ATP. The interaction with mats and Mob1 stretch occupies residues 118–179 (YAMKVLRKAD…EFLPGGDMMT (62 aa)). D215 (proton acceptor) is an active-site residue. S287 carries the post-translational modification Phosphoserine. Residues 390-458 (RGVDWEHIRE…YKRFEVRNLE (69 aa)) form the AGC-kinase C-terminal domain. At T448 the chain carries Phosphothreonine.

This sequence belongs to the protein kinase superfamily. AGC Ser/Thr protein kinase family. In terms of assembly, interacts with, and is activated by, Mob1. Mg(2+) serves as cofactor.

The protein localises to the cytoplasm. It localises to the nucleus. The enzyme catalyses L-seryl-[protein] + ATP = O-phospho-L-seryl-[protein] + ADP + H(+). It carries out the reaction L-threonyl-[protein] + ATP = O-phospho-L-threonyl-[protein] + ADP + H(+). Functionally, serine/threonine-protein kinase involved in controlling cell structure and proliferation of a variety of polarized outgrowths including epidermal hairs, bristles, arista laterals, and dendrites. Together with fry, maintains the integrity of epidermal hairs and is an essential component of the signaling pathway regulating dendritic branching of sensory neurons. Reduces neurite outgrowth by phosphorylating pav/pavarotti, thereby inhibiting its function in microtubule-microtubule sliding. This is Serine/threonine-protein kinase tricornered from Drosophila pseudoobscura pseudoobscura (Fruit fly).